Reading from the N-terminus, the 692-residue chain is DNA-binding protein RFX2 (692 aa).

A disordered region spans residues 1–26 (MQNSEGGADSPATVALRPAAQPVPAS). S26 is subject to Phosphoserine. The segment at residues 169 to 244 (TLQWLLDNYE…YHYYGIRLKP (76 aa)) is a DNA-binding region (RFX-type winged-helix). The interval 261 to 296 (RQQPTHQKPRYRPAQKSDSLGDGSAHSNMHSTPEQA) is disordered. Over residues 285–294 (AHSNMHSTPE) the composition is skewed to polar residues. The residue at position 386 (S386) is a Phosphoserine. The segment covering 660 to 685 (DGHSSEADVDGRSLGEPLVKRERSDP) has biased composition (basic and acidic residues). The interval 660-692 (DGHSSEADVDGRSLGEPLVKRERSDPSHPLQGI) is disordered.

This sequence belongs to the RFX family. In terms of assembly, homodimer; probably only forms homodimers in testis. Heterodimer; heterodimerizes with RFX1 and RFX3. As to expression, expressed at highest level in testis. Expressed at lower level in thymus. Also expressed in stomach, kidney, liver, brain and heart. Weakly expressed in spleen and lung. Within testis, most abundantly present in spermatocytes: present from pachytene spermatocytes to early spermatids (at protein level). Also present in non-germinal tissues.

The protein localises to the nucleus. The protein resides in the cytoplasm. Its function is as follows. Transcription factor that acts as a key regulator of spermatogenesis. Acts by regulating expression of genes required for the haploid phase during spermiogenesis, such as genes required for cilium assembly and function. Recognizes and binds the X-box, a regulatory motif with DNA sequence 5'-GTNRCC(0-3N)RGYAAC-3' present on promoters. Probably activates transcription of the testis-specific histone gene H1-6. This is DNA-binding protein RFX2 (Rfx2) from Rattus norvegicus (Rat).